The sequence spans 333 residues: Porphobilinogen deaminase (333 aa).

Cys-255 is subject to S-(dipyrrolylmethanemethyl)cysteine.

The protein belongs to the HMBS family. In terms of assembly, monomer. The cofactor is dipyrromethane.

The enzyme catalyses 4 porphobilinogen + H2O = hydroxymethylbilane + 4 NH4(+). It participates in porphyrin-containing compound metabolism; protoporphyrin-IX biosynthesis; coproporphyrinogen-III from 5-aminolevulinate: step 2/4. In terms of biological role, tetrapolymerization of the monopyrrole PBG into the hydroxymethylbilane pre-uroporphyrinogen in several discrete steps. This is Porphobilinogen deaminase from Burkholderia vietnamiensis (strain G4 / LMG 22486) (Burkholderia cepacia (strain R1808)).